A 102-amino-acid chain; its full sequence is Co-chaperonin GroES (102 aa).

Belongs to the GroES chaperonin family. In terms of assembly, heptamer of 7 subunits arranged in a ring. Interacts with the chaperonin GroEL.

It is found in the cytoplasm. Its function is as follows. Together with the chaperonin GroEL, plays an essential role in assisting protein folding. The GroEL-GroES system forms a nano-cage that allows encapsulation of the non-native substrate proteins and provides a physical environment optimized to promote and accelerate protein folding. GroES binds to the apical surface of the GroEL ring, thereby capping the opening of the GroEL channel. In Chlamydia muridarum (strain MoPn / Nigg), this protein is Co-chaperonin GroES.